We begin with the raw amino-acid sequence, 587 residues long: NADH-quinone oxidoreductase subunit C/D (587 aa).

The tract at residues 1–178 is NADH dehydrogenase I subunit C; that stretch reads MAAPTTEHAE…EPFSLPDDVQ (178 aa). The tract at residues 202–587 is NADH dehydrogenase I subunit D; sequence DFLFLNLGPN…IDFVMADVDR (386 aa).

It in the N-terminal section; belongs to the complex I 30 kDa subunit family. This sequence in the C-terminal section; belongs to the complex I 49 kDa subunit family. NDH-1 is composed of 13 different subunits. Subunits NuoB, CD, E, F, and G constitute the peripheral sector of the complex.

Its subcellular location is the cell inner membrane. The enzyme catalyses a quinone + NADH + 5 H(+)(in) = a quinol + NAD(+) + 4 H(+)(out). NDH-1 shuttles electrons from NADH, via FMN and iron-sulfur (Fe-S) centers, to quinones in the respiratory chain. The immediate electron acceptor for the enzyme in this species is believed to be ubiquinone. Couples the redox reaction to proton translocation (for every two electrons transferred, four hydrogen ions are translocated across the cytoplasmic membrane), and thus conserves the redox energy in a proton gradient. This is NADH-quinone oxidoreductase subunit C/D from Methylococcus capsulatus (strain ATCC 33009 / NCIMB 11132 / Bath).